Consider the following 202-residue polypeptide: Imidazoleglycerol-phosphate dehydratase (202 aa).

The protein belongs to the imidazoleglycerol-phosphate dehydratase family.

It localises to the cytoplasm. The enzyme catalyses D-erythro-1-(imidazol-4-yl)glycerol 3-phosphate = 3-(imidazol-4-yl)-2-oxopropyl phosphate + H2O. Its pathway is amino-acid biosynthesis; L-histidine biosynthesis; L-histidine from 5-phospho-alpha-D-ribose 1-diphosphate: step 6/9. This is Imidazoleglycerol-phosphate dehydratase from Clavibacter michiganensis subsp. michiganensis (strain NCPPB 382).